The sequence spans 357 residues: Fructose-1,6-bisphosphatase class 1 3 (357 aa).

4 residues coordinate Mg(2+): Glu94, Asp116, Leu118, and Asp119. Substrate contacts are provided by residues 119–122 (DGSS) and Asn211. Glu283 contacts Mg(2+).

It belongs to the FBPase class 1 family. Homotetramer. Mg(2+) serves as cofactor.

Its subcellular location is the cytoplasm. It catalyses the reaction beta-D-fructose 1,6-bisphosphate + H2O = beta-D-fructose 6-phosphate + phosphate. The protein operates within carbohydrate biosynthesis; Calvin cycle. In Methylibium petroleiphilum (strain ATCC BAA-1232 / LMG 22953 / PM1), this protein is Fructose-1,6-bisphosphatase class 1 3.